The following is a 502-amino-acid chain: ATP synthase subunit alpha, chloroplastic (502 aa).

An ATP-binding site is contributed by 170–177 (GDRQTGKT).

The protein belongs to the ATPase alpha/beta chains family. In terms of assembly, F-type ATPases have 2 components, CF(1) - the catalytic core - and CF(0) - the membrane proton channel. CF(1) has five subunits: alpha(3), beta(3), gamma(1), delta(1), epsilon(1). CF(0) has four main subunits: a, b, b' and c.

It localises to the plastid. Its subcellular location is the chloroplast thylakoid membrane. It carries out the reaction ATP + H2O + 4 H(+)(in) = ADP + phosphate + 5 H(+)(out). Functionally, produces ATP from ADP in the presence of a proton gradient across the membrane. The alpha chain is a regulatory subunit. The chain is ATP synthase subunit alpha, chloroplastic from Rhodomonas salina (Cryptomonas salina).